We begin with the raw amino-acid sequence, 126 residues long: MYLTLLKSKLHRACVTHIELEYEGSCAIDSVLLSTAGIQEYEQIHIYNLTNGERFVTYAIRAEDNSGIISVNGAAAHKACPGDRLIICTYAVFERSEMDSFKPLLIYLDDRNFITHTGNAIPVQVA.

The active-site Schiff-base intermediate with substrate; via pyruvic acid is the S25. A Pyruvic acid (Ser) modification is found at S25. Residue T57 participates in substrate binding. Y58 (proton donor) is an active-site residue. Residue 73–75 (GAA) participates in substrate binding.

Belongs to the PanD family. Heterooctamer of four alpha and four beta subunits. It depends on pyruvate as a cofactor. Is synthesized initially as an inactive proenzyme, which is activated by self-cleavage at a specific serine bond to produce a beta-subunit with a hydroxyl group at its C-terminus and an alpha-subunit with a pyruvoyl group at its N-terminus.

It is found in the cytoplasm. It carries out the reaction L-aspartate + H(+) = beta-alanine + CO2. It functions in the pathway cofactor biosynthesis; (R)-pantothenate biosynthesis; beta-alanine from L-aspartate: step 1/1. In terms of biological role, catalyzes the pyruvoyl-dependent decarboxylation of aspartate to produce beta-alanine. This Nitrosococcus oceani (strain ATCC 19707 / BCRC 17464 / JCM 30415 / NCIMB 11848 / C-107) protein is Aspartate 1-decarboxylase.